The chain runs to 327 residues: Tetraacyldisaccharide 4'-kinase (327 aa).

56–63 lines the ATP pocket; sequence FVGGTGKT.

The protein belongs to the LpxK family.

The enzyme catalyses a lipid A disaccharide + ATP = a lipid IVA + ADP + H(+). It functions in the pathway glycolipid biosynthesis; lipid IV(A) biosynthesis; lipid IV(A) from (3R)-3-hydroxytetradecanoyl-[acyl-carrier-protein] and UDP-N-acetyl-alpha-D-glucosamine: step 6/6. Its function is as follows. Transfers the gamma-phosphate of ATP to the 4'-position of a tetraacyldisaccharide 1-phosphate intermediate (termed DS-1-P) to form tetraacyldisaccharide 1,4'-bis-phosphate (lipid IVA). The chain is Tetraacyldisaccharide 4'-kinase from Halorhodospira halophila (strain DSM 244 / SL1) (Ectothiorhodospira halophila (strain DSM 244 / SL1)).